Here is a 170-residue protein sequence, read N- to C-terminus: NADH-quinone oxidoreductase subunit B (170 aa).

The [4Fe-4S] cluster site is built by C42, C43, C107, and C136.

This sequence belongs to the complex I 20 kDa subunit family. In terms of assembly, NDH-1 is composed of 14 different subunits. Subunits NuoB, C, D, E, F, and G constitute the peripheral sector of the complex. The cofactor is [4Fe-4S] cluster.

The protein localises to the cell inner membrane. It carries out the reaction a quinone + NADH + 5 H(+)(in) = a quinol + NAD(+) + 4 H(+)(out). NDH-1 shuttles electrons from NADH, via FMN and iron-sulfur (Fe-S) centers, to quinones in the respiratory chain. The immediate electron acceptor for the enzyme in this species is believed to be ubiquinone. Couples the redox reaction to proton translocation (for every two electrons transferred, four hydrogen ions are translocated across the cytoplasmic membrane), and thus conserves the redox energy in a proton gradient. The protein is NADH-quinone oxidoreductase subunit B of Campylobacter concisus (strain 13826).